Reading from the N-terminus, the 190-residue chain is Potassium-transporting ATPase KdpC subunit (190 aa).

A helical transmembrane segment spans residues 13–33; that stretch reads VGFLLLTLMCGVVYPGIVTIF.

The protein belongs to the KdpC family. The system is composed of three essential subunits: KdpA, KdpB and KdpC.

It localises to the cell membrane. Its function is as follows. Part of the high-affinity ATP-driven potassium transport (or Kdp) system, which catalyzes the hydrolysis of ATP coupled with the electrogenic transport of potassium into the cytoplasm. This subunit acts as a catalytic chaperone that increases the ATP-binding affinity of the ATP-hydrolyzing subunit KdpB by the formation of a transient KdpB/KdpC/ATP ternary complex. The polypeptide is Potassium-transporting ATPase KdpC subunit (Listeria monocytogenes serotype 4b (strain CLIP80459)).